A 35-amino-acid chain; its full sequence is Small toxic polypeptide LdrD (35 aa).

A helical transmembrane segment spans residues 10–32; it reads FWHDLAAPVIAGILASMIVNWLN.

It belongs to the Ldr toxic peptide family.

Its subcellular location is the cell inner membrane. Its function is as follows. Toxic component of a type I toxin-antitoxin (TA) system. Overexpression causes rapid cell killing and nucleoid condensation of the host cell. Overexpression induces stress-response and a number of membrane protein genes. May inhibit ATP synthesis due to its insertion in the cell inner membrane. The sequence is that of Small toxic polypeptide LdrD (ldrD) from Escherichia coli (strain K12).